Consider the following 966-residue polypeptide: MANFQEHLSCSSSPHLPFSESKTFNGLQDELTAMGNHPSPKLLEDQQEKGMVRTELIESVHSPVTTTVLTSVSEDSRDQFENSVLQLREHDESETAVSQGNSNTVDGESTSGTEDIKIQFSRSGSGSGGFLEGLFGCLRPVWNIIGKAYSTDYKLQQQDTWEVPFEEISELQWLGSGAQGAVFLGKFRAEEVAIKKVREQNETDIKHLRKLKHPNIIAFKGVCTQAPCYCIIMEYCAHGQLYEVLRAGRKITPRLLVDWSTGIASGMNYLHLHKIIHRDLKSPNVLVTHTDAVKISDFGTSKELSDKSTKMSFAGTVAWMAPEVIRNEPVSEKVDIWSFGVVLWELLTGEIPYKDVDSSAIIWGVGSNSLHLPVPSTCPDGFKILMKQTWQSKPRNRPSFRQTLMHLDIASADVLATPQETYFKSQAEWREEVKKHFEKIKSEGTCIHRLDEELIRRRREELRHALDIREHYERKLERANNLYMELSAIMLQLEMREKELIKREQAVEKKYPGTYKRHPVRPIIHPNAMEKLMKRKGVPHKSGMQTKRPDLLRSEGIPTTEVAPTASPLSGSPKMSTSSSKSRYRSKPRHRRGNSRGSHSDFAAILKNQPAQENSPHPTYLHQAQSQYPSLHHHNSLQQQYQQPPPAMSQSHHPRLNMHGQDIATCANNLRYFGPAAALRSPLSNHAQRQLPGSSPDLISTAMAADCWRSSEPDKGQAGPWGCCQADAYDPCLQCRPEQYGSLDIPSAEPVGRSPDLSKSPAHNPLLENAQSSEKTEENEFSGCRSESSLGTSHLGTPPALPRKTRPLQKSGDDSSEEEEGEVDSEVEFPRRQRPHRCISSCQSYSTFSSENFSVSDGEEGNTSDHSNSPDELADKLEDRLAEKLDDLLSQTPEIPIDISSHSDGLSDKECAVRRVKTQMSLGKLCVEERGYENPMQFEESDCDSSDGECSDATVRTNKHYSSATW.

Disordered stretches follow at residues 1–22 (MANF…SESK), 30–49 (ELTA…QQEK), and 90–114 (HDES…SGTE). Polar residues predominate over residues 95–113 (TAVSQGNSNTVDGESTSGT). One can recognise a Protein kinase domain in the interval 168–409 (ISELQWLGSG…FRQTLMHLDI (242 aa)). Residues 174–182 (LGSGAQGAV) and K195 each bind ATP. D279 (proton acceptor) is an active-site residue. Leucine-zipper regions lie at residues 433–454 (VKKH…DEEL) and 486–507 (LSAI…EQAV). 4 disordered regions span residues 534-599 (KRKG…RGSH), 611-655 (AQEN…HHPR), 744-834 (DIPS…RRQR), and 846-908 (STFS…GLSD). Residues 567 to 581 (SPLSGSPKMSTSSSK) show a composition bias toward low complexity. A compositionally biased stretch (basic residues) spans 582–594 (SRYRSKPRHRRGN). Polar residues-rich tracts occupy residues 611–629 (AQEN…SQYP) and 785–795 (RSESSLGTSHL). A compositionally biased stretch (acidic residues) spans 814-827 (DSSEEEEGEVDSEV). The segment at 815-828 (SSEEEEGEVDSEVE) is acidic. Residues 846–855 (STFSSENFSV) show a composition bias toward polar residues. The segment covering 873 to 887 (LADKLEDRLAEKLDD) has biased composition (basic and acidic residues).

Belongs to the protein kinase superfamily. STE Ser/Thr protein kinase family. MAP kinase kinase kinase subfamily. Homodimer; forms dimers through the leucine-zipper motif. Interacts with the C-terminus of MAPK8IP1 through the kinase catalytic domain. Binds PRDX3. Associates with the IKK complex through the kinase domain. It depends on Mg(2+) as a cofactor. Autophosphorylated on serine and threonine residues. As to expression, expressed in the adult brain, liver, placenta and pancreas, with expression strongest in the pancreas.

Its subcellular location is the cytoplasm. The protein localises to the membrane. It carries out the reaction L-seryl-[protein] + ATP = O-phospho-L-seryl-[protein] + ADP + H(+). The enzyme catalyses L-threonyl-[protein] + ATP = O-phospho-L-threonyl-[protein] + ADP + H(+). Activated by autophosphorylation and homodimerization. Functionally, activates the JUN N-terminal pathway through activation of the MAP kinase kinase MAP2K7. Acts synergistically with PRDX3 to regulate the activation of NF-kappa-B in the cytosol. This activation is kinase-dependent and involves activating the IKK complex, the IKBKB-containing complex that phosphorylates inhibitors of NF-kappa-B. The protein is Mitogen-activated protein kinase kinase kinase 13 of Homo sapiens (Human).